A 480-amino-acid polypeptide reads, in one-letter code: Dimethyl-sulfide monooxygenase (480 aa).

FMN is bound by residues D58, T104, H154, Y158, and S230. The disordered stretch occupies residues 423–480 (QDSYKPGSLRRKLIGTNDGRVESTHPAAQYRDAYVGKESVADRTQPSPFANAKAPVAE).

It belongs to the NtaA/SnaA/DszA monooxygenase family. Heterodimer of 2 subunits, DmoA and DmoB. Requires FMN as cofactor.

It catalyses the reaction dimethyl sulfide + NADH + O2 + H(+) = methanethiol + formaldehyde + NAD(+) + H2O. Inhibited by umbelliferone, 8-anilinonaphthalenesulfonate, a range of metal-chelating agents, and Hg(2+), Cd(2+) and Pb(2+) ions. Functionally, monooxygenase that mediates oxidation of dimethyl sulfide, the first step in dimethyl sulfide degradation pathway. Has much lower activity with diethyl sulfide and other short-chain alkyl methyl sulfides. The protein is Dimethyl-sulfide monooxygenase (dmoA) of Hyphomicrobium sulfonivorans.